We begin with the raw amino-acid sequence, 85 residues long: Large ribosomal subunit protein bL27 (85 aa).

Residues 1–24 (MAHKKAGGSSRNGRDSNSKRLGVK) are disordered.

Belongs to the bacterial ribosomal protein bL27 family.

The sequence is that of Large ribosomal subunit protein bL27 from Nitrosospira multiformis (strain ATCC 25196 / NCIMB 11849 / C 71).